Consider the following 107-residue polypeptide: Nucleoid-associated protein BAbS19_I00290 (107 aa).

Belongs to the YbaB/EbfC family. As to quaternary structure, homodimer.

It localises to the cytoplasm. It is found in the nucleoid. Binds to DNA and alters its conformation. May be involved in regulation of gene expression, nucleoid organization and DNA protection. This is Nucleoid-associated protein BAbS19_I00290 from Brucella abortus (strain S19).